Consider the following 544-residue polypeptide: E3 ubiquitin-protein ligase makorin-3 (544 aa).

2 disordered regions span residues 1–46 (MEES…VSSA) and 117–144 (DLSG…KMAT). Composition is skewed to low complexity over residues 9-19 (EAHAAAGAEAG) and 36-46 (AAGASAGVSSA). C3H1-type zinc fingers lie at residues 92 to 119 (WTKQ…HDLS) and 274 to 301 (PMPL…HGEI). Residues 302 to 329 (CDMCGQQALHPWDAAQQEAHRRACVEAH) form a makorin-type Cys-His region. The RING-type zinc finger occupies 347–401 (CGICMEVVYEKADPSDRRFGILFSCNHTYCLRCIRRWRSATQFENRISKSCPQCR). A C3H1-type 3 zinc finger spans residues 430–459 (GMSQKACRYFAGGLGHCPFGEFCFYKHEYP).

In terms of tissue distribution, mainly expressed in mouse brain and reproductive system including testis and ovary. Ubiquitously detected at low levels throughout the entire embryo, but expression is highest in the ventricular layers of the brain.

It localises to the nucleus. It catalyses the reaction S-ubiquitinyl-[E2 ubiquitin-conjugating enzyme]-L-cysteine + [acceptor protein]-L-lysine = [E2 ubiquitin-conjugating enzyme]-L-cysteine + N(6)-ubiquitinyl-[acceptor protein]-L-lysine.. It functions in the pathway protein modification; protein ubiquitination. E3 ubiquitin ligase catalyzing the covalent attachment of ubiquitin moieties onto substrate proteins. Acts as a key developmental timer that helps ensure puberty begins at the appropriate age, by inhibiting premature activation of the reproductive hormone cascade. Epigenetically regulates GNRH1 transcription by disrupting the binding of methyl-DNA binding protein 3/MBD3 to the promoter of GNRH1. Mechanistically, mediates the non-proteolytic ubiquitination of MBD3 at multiple sites with 'Lys27' ubiquitin linkages and thereby regulates the methylation status of the genome, including GNRH1 promoter. Modulates the stability and translation of GNRH1 mRNA by mediating the non-proteolytic ubiquitination of PABP family members PABPC1, PABPC3 and PABPC4 at multiple sites. Also participates in the maintenance of genomic and epigenomic stability by regulating the abundance of APEX2 via 'Lys-48'-linked ubiquitination. The chain is E3 ubiquitin-protein ligase makorin-3 (Mkrn3) from Mus musculus (Mouse).